The following is a 376-amino-acid chain: Cytochrome b (376 aa).

Helical transmembrane passes span 28–48, 72–94, 107–127, and 169–189; these read YGFL…FLAS, WCFR…LHIL, SWIS…IGYV, and FFVL…IHIF. The heme b site is built by histidine 78 and histidine 92. The heme b site is built by histidine 173 and histidine 187. A ubiquinone is bound at residue histidine 192. 4 helical membrane passes run 214 to 234, 274 to 294, 317 to 337, and 340 to 360; these read LLSL…IQSI, IPSK…LFLL, VPII…CPLP, and IFIL…LFSL.

This sequence belongs to the cytochrome b family. As to quaternary structure, the main subunits of complex b-c1 are: cytochrome b, cytochrome c1 and the Rieske protein. Requires heme b as cofactor.

It localises to the mitochondrion inner membrane. Functionally, component of the ubiquinol-cytochrome c reductase complex (complex III or cytochrome b-c1 complex) that is part of the mitochondrial respiratory chain. The b-c1 complex mediates electron transfer from ubiquinol to cytochrome c. Contributes to the generation of a proton gradient across the mitochondrial membrane that is then used for ATP synthesis. This Plasmodium berghei protein is Cytochrome b (MT-CYB).